The following is a 98-amino-acid chain: NADH-ubiquinone oxidoreductase chain 4L (98 aa).

3 consecutive transmembrane segments (helical) span residues Met1–Met21, Ser29–Leu49, and Ile61–Val81.

This sequence belongs to the complex I subunit 4L family. In terms of assembly, core subunit of respiratory chain NADH dehydrogenase (Complex I) which is composed of 45 different subunits.

Its subcellular location is the mitochondrion inner membrane. It carries out the reaction a ubiquinone + NADH + 5 H(+)(in) = a ubiquinol + NAD(+) + 4 H(+)(out). Functionally, core subunit of the mitochondrial membrane respiratory chain NADH dehydrogenase (Complex I) which catalyzes electron transfer from NADH through the respiratory chain, using ubiquinone as an electron acceptor. Part of the enzyme membrane arm which is embedded in the lipid bilayer and involved in proton translocation. The chain is NADH-ubiquinone oxidoreductase chain 4L (MT-ND4L) from Puma concolor (Mountain lion).